Reading from the N-terminus, the 688-residue chain is Glycine--tRNA ligase beta subunit (688 aa).

It belongs to the class-II aminoacyl-tRNA synthetase family. As to quaternary structure, tetramer of two alpha and two beta subunits.

It localises to the cytoplasm. It catalyses the reaction tRNA(Gly) + glycine + ATP = glycyl-tRNA(Gly) + AMP + diphosphate. This Shewanella sp. (strain MR-7) protein is Glycine--tRNA ligase beta subunit.